The sequence spans 210 residues: Orotate phosphoribosyltransferase (210 aa).

Residues arginine 94, lysine 98, histidine 100, and glutamate 120 to serine 128 contribute to the 5-phospho-alpha-D-ribose 1-diphosphate site. Serine 124 serves as a coordination point for orotate.

This sequence belongs to the purine/pyrimidine phosphoribosyltransferase family. PyrE subfamily. As to quaternary structure, homodimer. The cofactor is Mg(2+).

It catalyses the reaction orotidine 5'-phosphate + diphosphate = orotate + 5-phospho-alpha-D-ribose 1-diphosphate. It participates in pyrimidine metabolism; UMP biosynthesis via de novo pathway; UMP from orotate: step 1/2. Catalyzes the transfer of a ribosyl phosphate group from 5-phosphoribose 1-diphosphate to orotate, leading to the formation of orotidine monophosphate (OMP). The chain is Orotate phosphoribosyltransferase from Halalkalibacterium halodurans (strain ATCC BAA-125 / DSM 18197 / FERM 7344 / JCM 9153 / C-125) (Bacillus halodurans).